The chain runs to 466 residues: Asparagine--tRNA ligase (466 aa).

It belongs to the class-II aminoacyl-tRNA synthetase family. Homodimer.

It is found in the cytoplasm. The catalysed reaction is tRNA(Asn) + L-asparagine + ATP = L-asparaginyl-tRNA(Asn) + AMP + diphosphate + H(+). The polypeptide is Asparagine--tRNA ligase (Shewanella sediminis (strain HAW-EB3)).